A 389-amino-acid chain; its full sequence is Vacuolar protein sorting-associated protein vts1 (389 aa).

Positions 149-335 (NPQRKAKTPS…RPSQPTKASP (187 aa)) are disordered. Composition is skewed to polar residues over residues 156–177 (TPSN…TLPT), 184–219 (TNAS…SSEP), and 227–282 (SLSS…PESK). The segment covering 294–306 (TSITTTSTSIDPS) has biased composition (low complexity). The segment covering 308-334 (AFSSKSTLATTRTNAPLSRPSQPTKAS) has biased composition (polar residues).

The protein belongs to the VTA1 family. As to quaternary structure, homodimer (in cytoplasm).

It is found in the cytoplasm. It localises to the endosome membrane. Functionally, has a role in the formation of the multivesicular body (MVB). Required for the sorting of lipids to form intralumenal vesicles and for fluid-phase transport to the vacuole. Required for sorting several plasma membrane proteins into the MVB. The sequence is that of Vacuolar protein sorting-associated protein vts1 (vts1) from Schizosaccharomyces pombe (strain 972 / ATCC 24843) (Fission yeast).